Reading from the N-terminus, the 367-residue chain is Glutamate 5-kinase (367 aa).

Lysine 10 serves as a coordination point for ATP. Residues serine 50, aspartate 137, and asparagine 149 each contribute to the substrate site. ATP contacts are provided by residues 169–170 (TD) and 211–217 (TGGMSTK). A PUA domain is found at 275–353 (AGEITVDDGA…QQIAEILGYE (79 aa)).

It belongs to the glutamate 5-kinase family.

The protein localises to the cytoplasm. The enzyme catalyses L-glutamate + ATP = L-glutamyl 5-phosphate + ADP. It participates in amino-acid biosynthesis; L-proline biosynthesis; L-glutamate 5-semialdehyde from L-glutamate: step 1/2. Its function is as follows. Catalyzes the transfer of a phosphate group to glutamate to form L-glutamate 5-phosphate. The sequence is that of Glutamate 5-kinase from Pectobacterium atrosepticum (strain SCRI 1043 / ATCC BAA-672) (Erwinia carotovora subsp. atroseptica).